The following is a 233-amino-acid chain: tRNA (guanine-N(7)-)-methyltransferase (233 aa).

Residues 1–22 (MIDENHPMRAAGNFFGRRHGKP) form a disordered region. Residues E64, E89, D116, and D138 each contribute to the S-adenosyl-L-methionine site. The active site involves D138. Substrate contacts are provided by residues K142, D174, and 212–215 (TRYE).

Belongs to the class I-like SAM-binding methyltransferase superfamily. TrmB family.

It catalyses the reaction guanosine(46) in tRNA + S-adenosyl-L-methionine = N(7)-methylguanosine(46) in tRNA + S-adenosyl-L-homocysteine. It participates in tRNA modification; N(7)-methylguanine-tRNA biosynthesis. In terms of biological role, catalyzes the formation of N(7)-methylguanine at position 46 (m7G46) in tRNA. This Brucella abortus (strain 2308) protein is tRNA (guanine-N(7)-)-methyltransferase.